Reading from the N-terminus, the 589-residue chain is ATP-dependent lipid A-core flippase (589 aa).

5 helical membrane-spanning segments follow: residues L29–L49, W70–D90, V157–V177, M261–G281, and L283–K303. The ABC transmembrane type-1 domain occupies V32–R314. An ABC transporter domain is found at I346–M582. G380–S387 serves as a coordination point for ATP.

This sequence belongs to the ABC transporter superfamily. Lipid exporter (TC 3.A.1.106) family. Homodimer.

The protein localises to the cell inner membrane. The enzyme catalyses ATP + H2O + lipid A-core oligosaccharideSide 1 = ADP + phosphate + lipid A-core oligosaccharideSide 2.. In terms of biological role, involved in lipopolysaccharide (LPS) biosynthesis. Translocates lipid A-core from the inner to the outer leaflet of the inner membrane. Transmembrane domains (TMD) form a pore in the inner membrane and the ATP-binding domain (NBD) is responsible for energy generation. This is ATP-dependent lipid A-core flippase from Xanthomonas campestris pv. campestris (strain 8004).